The following is a 442-amino-acid chain: Trigger factor (442 aa).

The PPIase FKBP-type domain maps to 165-250 (DDRVIIDFEG…LQKVMAPELP (86 aa)).

The protein belongs to the FKBP-type PPIase family. Tig subfamily.

The protein localises to the cytoplasm. It carries out the reaction [protein]-peptidylproline (omega=180) = [protein]-peptidylproline (omega=0). Involved in protein export. Acts as a chaperone by maintaining the newly synthesized protein in an open conformation. Functions as a peptidyl-prolyl cis-trans isomerase. In Coxiella burnetii (strain CbuG_Q212) (Coxiella burnetii (strain Q212)), this protein is Trigger factor.